An 82-amino-acid chain; its full sequence is Small ribosomal subunit protein bS16 (82 aa).

It belongs to the bacterial ribosomal protein bS16 family.

This chain is Small ribosomal subunit protein bS16, found in Pseudoalteromonas translucida (strain TAC 125).